The following is a 185-amino-acid chain: NOP protein chaperone 1 (185 aa).

Residues methionine 1–isoleucine 40 are disordered. Residues serine 10 to serine 21 are compositionally biased toward low complexity. Residues serine 34 and serine 66 each carry the phosphoserine modification. Residues phenylalanine 118–lysine 185 form a disordered region. The span at serine 143–isoleucine 152 shows a compositional bias: acidic residues. Position 178 is a phosphoserine (serine 178).

In terms of assembly, interacts with NOP58, RUVBL1 and RUVBL2; the interactions are direct and NOPCHAP1 bridges the association of NOP58 with RUVBL1:RUVBL2 even in absence of snoRNAs. The interactions with RUVBL1 and RUVBL2 are disrupted upon ATP binding.

Its subcellular location is the nucleus. Its function is as follows. Client-loading PAQosome/R2TP complex cofactor that selects NOP58 to promote box C/D small nucleolar ribonucleoprotein (snoRNP) assembly. Acts as a bridge between NOP58 and the R2TP complex via RUVBL1:RUVBL2. The protein is NOP protein chaperone 1 of Homo sapiens (Human).